A 260-amino-acid polypeptide reads, in one-letter code: PHD finger protein ALFIN-LIKE 5 (260 aa).

N-acetylmethionine is present on M1. Positions 142–203 (AEKQTKEMPS…EEDEDEDEHG (62 aa)) are disordered. Polar residues predominate over residues 148–165 (EMPSSANQNGNRSKSNSK). Residues 167–181 (RGLESKSSKTIHAKD) show a composition bias toward basic and acidic residues. A compositionally biased stretch (acidic residues) spans 182–202 (EEEGLELEEGEEEEDEDEDEH). Residues 204–256 (ETLCGACGDNYASDEFWICCDMCEKWFHGECVKITPARAEHIKHYKCPTCSNK) form a PHD-type zinc finger.

The protein belongs to the Alfin family. In terms of assembly, interacts with H3K4me3 and to a lesser extent with H3K4me2. Ubiquitously expressed.

The protein localises to the nucleus. Functionally, histone-binding component that specifically recognizes H3 tails trimethylated on 'Lys-4' (H3K4me3), which mark transcription start sites of virtually all active genes. This chain is PHD finger protein ALFIN-LIKE 5 (AL5), found in Arabidopsis thaliana (Mouse-ear cress).